The chain runs to 61 residues: Small ribosomal subunit protein bS21 (61 aa).

The interval 34–61 (KREHYESPSVKRKKKSEAARKRKYKYNK) is disordered. Basic residues predominate over residues 43 to 61 (VKRKKKSEAARKRKYKYNK).

It belongs to the bacterial ribosomal protein bS21 family.

This is Small ribosomal subunit protein bS21 from Thermoanaerobacter pseudethanolicus (strain ATCC 33223 / 39E) (Clostridium thermohydrosulfuricum).